The chain runs to 144 residues: Large ribosomal subunit protein uL15 (144 aa).

Positions 1-57 are disordered; sequence MKLNDLSPAPGSRREKHRPGRGIGSGLGKTGGRGHKGQSSRSGGTIAPGFEGGQQPL. Over residues 21 to 31 the composition is skewed to gly residues; sequence RGIGSGLGKTG.

It belongs to the universal ribosomal protein uL15 family. In terms of assembly, part of the 50S ribosomal subunit.

Binds to the 23S rRNA. The polypeptide is Large ribosomal subunit protein uL15 (Pseudomonas savastanoi pv. phaseolicola (strain 1448A / Race 6) (Pseudomonas syringae pv. phaseolicola (strain 1448A / Race 6))).